The chain runs to 103 residues: Histone H4 variant TH091 (103 aa).

The tract at residues 1–20 (MSGRDKGGKGLGKGGAKRHR) is disordered. Ser2 carries the N-acetylserine modification. An N6-acetyllysine mark is found at Lys6, Lys9, Lys13, Lys17, and Lys21. Residues 17–21 (KRHRK) mediate DNA binding.

It belongs to the histone H4 family. In terms of assembly, the nucleosome is a histone octamer containing two molecules each of H2A, H2B, H3 and H4 assembled in one H3-H4 heterotetramer and two H2A-H2B heterodimers. The octamer wraps approximately 147 bp of DNA.

It is found in the nucleus. The protein localises to the chromosome. Functionally, core component of nucleosome. Nucleosomes wrap and compact DNA into chromatin, limiting DNA accessibility to the cellular machineries which require DNA as a template. Histones thereby play a central role in transcription regulation, DNA repair, DNA replication and chromosomal stability. DNA accessibility is regulated via a complex set of post-translational modifications of histones, also called histone code, and nucleosome remodeling. The chain is Histone H4 variant TH091 from Triticum aestivum (Wheat).